A 546-amino-acid chain; its full sequence is Serine/threonine-protein kinase Chk2 (546 aa).

The interval 1-70 is disordered; sequence MKSHHQSHSS…SSHSSSGTLS (70 aa). Residues 8–70 show a composition bias toward low complexity; sequence HSSTSSKAHD…SSHSSSGTLS (63 aa). Residue threonine 68 is modified to Phosphothreonine; by MAP3K20. Phosphoserine; by PLK3 is present on serine 71. Position 77 is a phosphothreonine; by ATM and MAP3K20 (threonine 77). Serine 82 is modified (phosphoserine; by PLK3). The 63-residue stretch at 117-179 folds into the FHA domain; it reads YWFGRDKSCE…NGTFVNTELI (63 aa). A Protein kinase domain is found at 224–490; sequence YIMSKTLGSG…TEEALNHPWL (267 aa). Residues 231 to 238, lysine 253, and 306 to 312 contribute to the ATP site; these read GSGACGEV and ELMEGGE. The active-site Proton acceptor is aspartate 351. ATP contacts are provided by residues 355–356 and aspartate 372; that span reads EN. The tract at residues 372-398 is T-loop/activation segment; that stretch reads DFGQSKILGETSLMRTLCGTPTYLAPE. Residue serine 383 is modified to Phosphoserine; by autocatalysis. Threonine 387 and threonine 391 each carry phosphothreonine; by autocatalysis. Serine 460 is modified (phosphoserine).

The protein belongs to the protein kinase superfamily. CAMK Ser/Thr protein kinase family. CHK2 subfamily. Homodimer. Homodimerization is part of the activation process but the dimer may dissociate following activation. Interacts with PML. Interacts with TP53. Interacts with RB1; phosphorylates RB1. Interacts with BRCA1. Interacts (phosphorylated at Thr-68) with MDC1; requires ATM-mediated phosphorylation of CHEK2. Interacts with TP53BP1; modulates CHEK2 phosphorylation at Thr-68 in response to ionizing radiation. Interacts with CDC25A; phosphorylates CDC25A and mediates its degradation in response to ionizing radiation. Interacts with CUL1; mediates CHEK2 ubiquitination and regulation. Interacts with CDKN2AIP. Interacts (via protein kinase domain) with CCAR2 (via N-terminus). Interacts with SIRT1. The cofactor is Mg(2+). Post-translationally, phosphorylated. Phosphorylated at Ser-82 by PLK3 in response to DNA damage, promoting phosphorylation at Thr-77 by ATM and the G2/M transition checkpoint. Phosphorylation at Thr-77 induces homodimerization. Autophosphorylates at Thr-387 and Thr-391 in the T-loop/activation segment upon dimerization to become fully active. DNA damage-induced autophosphorylation at Ser-383 induces CUL1-mediated ubiquitination and regulates the pro-apoptotic function. Phosphorylation at Ser-460 also regulates ubiquitination. Phosphorylated by PLK4. In terms of processing, ubiquitinated. CUL1-mediated ubiquitination regulates the pro-apoptotic function. Ubiquitination may also regulate protein stability. Ubiquitinated by RNF8 via 'Lys-48'-linked ubiquitination. Ubiquitously expressed with higher levels in the thymus, spleen and colon (at protein level).

It localises to the nucleus. The protein resides in the PML body. Its subcellular location is the nucleoplasm. It carries out the reaction L-seryl-[protein] + ATP = O-phospho-L-seryl-[protein] + ADP + H(+). The enzyme catalyses L-threonyl-[protein] + ATP = O-phospho-L-threonyl-[protein] + ADP + H(+). Its activity is regulated as follows. Activated through phosphorylation at Thr-68 by ATM in response to DNA double-strand breaks. Activation is modulated by several mediators including MDC1 and TP53BP1. Induces homodimerization with exchange of the T-loop/activation segment between protomers and transphosphorylation of the protomers. The autophosphorylated kinase dimer is fully active. Negatively regulated by PPM1D through dephosphorylation of Thr-68. Its function is as follows. Serine/threonine-protein kinase which is required for checkpoint-mediated cell cycle arrest, activation of DNA repair and apoptosis in response to the presence of DNA double-strand breaks. May also negatively regulate cell cycle progression during unperturbed cell cycles. Following activation, phosphorylates numerous effectors preferentially at the consensus sequence [L-X-R-X-X-S/T]. Regulates cell cycle checkpoint arrest through phosphorylation of CDC25A, CDC25B and CDC25C, inhibiting their activity. Inhibition of CDC25 phosphatase activity leads to increased inhibitory tyrosine phosphorylation of CDK-cyclin complexes and blocks cell cycle progression. May also phosphorylate NEK6 which is involved in G2/M cell cycle arrest. Regulates DNA repair through phosphorylation of BRCA2, enhancing the association of RAD51 with chromatin which promotes DNA repair by homologous recombination. Also stimulates the transcription of genes involved in DNA repair (including BRCA2) through the phosphorylation and activation of the transcription factor FOXM1. Regulates apoptosis through the phosphorylation of p53/TP53, MDM4 and PML. Phosphorylation of p53/TP53 at 'Ser-20' by CHEK2 may alleviate inhibition by MDM2, leading to accumulation of active p53/TP53. Phosphorylation of MDM4 may also reduce degradation of p53/TP53. Also controls the transcription of pro-apoptotic genes through phosphorylation of the transcription factor E2F1. Tumor suppressor, it may also have a DNA damage-independent function in mitotic spindle assembly by phosphorylating BRCA1. Its absence may be a cause of the chromosomal instability observed in some cancer cells. Promotes the CCAR2-SIRT1 association and is required for CCAR2-mediated SIRT1 inhibition. Under oxidative stress, promotes ATG7 ubiquitination by phosphorylating the E3 ubiquitin ligase TRIM32 at 'Ser-56' leading to positive regulation of the autophagosme assembly. This Mus musculus (Mouse) protein is Serine/threonine-protein kinase Chk2.